A 130-amino-acid polypeptide reads, in one-letter code: Putative pre-16S rRNA nuclease (130 aa).

It belongs to the YqgF nuclease family.

Its subcellular location is the cytoplasm. Could be a nuclease involved in processing of the 5'-end of pre-16S rRNA. This is Putative pre-16S rRNA nuclease from Sulfurimonas denitrificans (strain ATCC 33889 / DSM 1251) (Thiomicrospira denitrificans (strain ATCC 33889 / DSM 1251)).